Consider the following 456-residue polypeptide: Bifunctional protein GlmU (456 aa).

Positions 1-229 are pyrophosphorylase; the sequence is MYKCALILAA…FEEILGVNSR (229 aa). Residues 8 to 11, Lys-22, Gln-73, and 78 to 79 contribute to the UDP-N-acetyl-alpha-D-glucosamine site; these read LAAG and GT. Residue Asp-103 coordinates Mg(2+). UDP-N-acetyl-alpha-D-glucosamine contacts are provided by Gly-140, Glu-155, Asn-170, and Asn-227. Asn-227 serves as a coordination point for Mg(2+). Residues 230–250 are linker; it reads LQLCQVGKVMQKRINEKHMEN. Residues 251-456 are N-acetyltransferase; it reads GSTLIDPDNT…GWVDKKGLLK (206 aa). The UDP-N-acetyl-alpha-D-glucosamine site is built by Arg-332 and Lys-350. His-362 (proton acceptor) is an active-site residue. The UDP-N-acetyl-alpha-D-glucosamine site is built by Tyr-365 and Asn-376. Acetyl-CoA is bound by residues 385-386, Ala-422, and Arg-439; that span reads NY.

In the N-terminal section; belongs to the N-acetylglucosamine-1-phosphate uridyltransferase family. This sequence in the C-terminal section; belongs to the transferase hexapeptide repeat family. In terms of assembly, homotrimer. It depends on Mg(2+) as a cofactor.

Its subcellular location is the cytoplasm. It carries out the reaction alpha-D-glucosamine 1-phosphate + acetyl-CoA = N-acetyl-alpha-D-glucosamine 1-phosphate + CoA + H(+). It catalyses the reaction N-acetyl-alpha-D-glucosamine 1-phosphate + UTP + H(+) = UDP-N-acetyl-alpha-D-glucosamine + diphosphate. The protein operates within nucleotide-sugar biosynthesis; UDP-N-acetyl-alpha-D-glucosamine biosynthesis; N-acetyl-alpha-D-glucosamine 1-phosphate from alpha-D-glucosamine 6-phosphate (route II): step 2/2. It participates in nucleotide-sugar biosynthesis; UDP-N-acetyl-alpha-D-glucosamine biosynthesis; UDP-N-acetyl-alpha-D-glucosamine from N-acetyl-alpha-D-glucosamine 1-phosphate: step 1/1. Its pathway is bacterial outer membrane biogenesis; LPS lipid A biosynthesis. Functionally, catalyzes the last two sequential reactions in the de novo biosynthetic pathway for UDP-N-acetylglucosamine (UDP-GlcNAc). The C-terminal domain catalyzes the transfer of acetyl group from acetyl coenzyme A to glucosamine-1-phosphate (GlcN-1-P) to produce N-acetylglucosamine-1-phosphate (GlcNAc-1-P), which is converted into UDP-GlcNAc by the transfer of uridine 5-monophosphate (from uridine 5-triphosphate), a reaction catalyzed by the N-terminal domain. This is Bifunctional protein GlmU from Clostridium acetobutylicum (strain ATCC 824 / DSM 792 / JCM 1419 / IAM 19013 / LMG 5710 / NBRC 13948 / NRRL B-527 / VKM B-1787 / 2291 / W).